Reading from the N-terminus, the 328-residue chain is tRNA uridine(34) hydroxylase (328 aa).

Residues 122-218 (QENRCLVLDV…YGLKMGTGKW (97 aa)) enclose the Rhodanese domain. Cysteine 178 serves as the catalytic Cysteine persulfide intermediate.

It belongs to the TrhO family.

The catalysed reaction is uridine(34) in tRNA + AH2 + O2 = 5-hydroxyuridine(34) in tRNA + A + H2O. In terms of biological role, catalyzes oxygen-dependent 5-hydroxyuridine (ho5U) modification at position 34 in tRNAs. This Chlamydia muridarum (strain MoPn / Nigg) protein is tRNA uridine(34) hydroxylase.